Here is a 207-residue protein sequence, read N- to C-terminus: Methylated-DNA--protein-cysteine methyltransferase (207 aa).

Positions 123 and 137 each coordinate DNA. Cys154 (nucleophile; methyl group acceptor) is an active-site residue. Ser160 serves as a coordination point for DNA.

It belongs to the MGMT family.

It is found in the nucleus. The enzyme catalyses a 6-O-methyl-2'-deoxyguanosine in DNA + L-cysteinyl-[protein] = S-methyl-L-cysteinyl-[protein] + a 2'-deoxyguanosine in DNA. It catalyses the reaction a 4-O-methyl-thymidine in DNA + L-cysteinyl-[protein] = a thymidine in DNA + S-methyl-L-cysteinyl-[protein]. In terms of biological role, involved in the cellular defense against the biological effects of O6-methylguanine (O6-MeG) and O4-methylthymine (O4-MeT) in DNA. Repairs the methylated nucleobase in DNA by stoichiometrically transferring the methyl group to a cysteine residue in the enzyme. This is a suicide reaction: the enzyme is irreversibly inactivated. This is Methylated-DNA--protein-cysteine methyltransferase (MGT1) from Candida glabrata (strain ATCC 2001 / BCRC 20586 / JCM 3761 / NBRC 0622 / NRRL Y-65 / CBS 138) (Yeast).